The following is a 494-amino-acid chain: MFQVQKELASHEAVVVALFEEEKTSSFVQELDKAFEGQLQVLLEEKELSTKKKAISKVHSLGKTDVKRYYFVGLGKKESYTTETLRSALGKTFKTLQAAKVQDAAILLDSFVTEKLDAIDVAHIAAEVQGLGTYELQTYKSDKKDRVELEKFTAITAEDAQEIEAALTVGYVHGRATNSARTLVNMPPNVLTATKLAEYAVELAEKYDMDYKVLEKEEMEELGMGALLAVNQGSVEPPKMIALIYKGKEEWTDVIGFVGKGITYDTGGYSLKPREGMVGMKGDMGGAAAVLGAMEIIGELRPEQNVIAVIPSTDNVVSGTAFKPDDVITSMSGKTIEVLNTDAEGRLALADGITYAKKLGANYLIDVATLTGGVIVALGNHTTGAMTNNEELFEQVLEASMETDESIWQLPIFDRDKERVRNSKFADLNNSPGREGHAVMAGTFLGEFAEDTPWVHLDIAGTSESSGAHDLGPAGATGAMVRTLATLVERFGEE.

Mn(2+)-binding residues include K260 and D265. K272 is an active-site residue. Mn(2+)-binding residues include D283, D342, and E344. The active site involves R346.

This sequence belongs to the peptidase M17 family. Mn(2+) serves as cofactor.

It is found in the cytoplasm. The catalysed reaction is Release of an N-terminal amino acid, Xaa-|-Yaa-, in which Xaa is preferably Leu, but may be other amino acids including Pro although not Arg or Lys, and Yaa may be Pro. Amino acid amides and methyl esters are also readily hydrolyzed, but rates on arylamides are exceedingly low.. The enzyme catalyses Release of an N-terminal amino acid, preferentially leucine, but not glutamic or aspartic acids.. Its function is as follows. Presumably involved in the processing and regular turnover of intracellular proteins. Catalyzes the removal of unsubstituted N-terminal amino acids from various peptides. This Bacillus cereus (strain ZK / E33L) protein is Probable cytosol aminopeptidase.